Here is a 191-residue protein sequence, read N- to C-terminus: MTGFDRARIEAAVAEILAAVGEDPSRPGLSATPSRVADAYAEFFAGLGRDAEAELGEPVPLEQGQAETVILREISFRSVCEHHLLPFIGVAHVAYLPGEAVIGLGRIPRVIDTLAARPQVQERLTEQIADTFEAGAGARGVLVVLSAEHGCVTARGPRQVAATTVTLAARGEFAEPAARAELIALIGCGAA.

Residues cysteine 80, histidine 83, and cysteine 151 each coordinate Zn(2+).

It belongs to the GTP cyclohydrolase I family. In terms of assembly, toroid-shaped homodecamer, composed of two pentamers of five dimers.

The catalysed reaction is GTP + H2O = 7,8-dihydroneopterin 3'-triphosphate + formate + H(+). Its pathway is cofactor biosynthesis; 7,8-dihydroneopterin triphosphate biosynthesis; 7,8-dihydroneopterin triphosphate from GTP: step 1/1. The protein is GTP cyclohydrolase 1 of Leifsonia xyli subsp. xyli (strain CTCB07).